The following is a 438-amino-acid chain: UPF0229 protein NGR_c12350 (438 aa).

Basic and acidic residues predominate over residues M1–L16. Disordered stretches follow at residues M1–Q20 and F83–Q107. The segment covering S94 to T105 has biased composition (gly residues).

The protein belongs to the UPF0229 family.

The protein is UPF0229 protein NGR_c12350 of Sinorhizobium fredii (strain NBRC 101917 / NGR234).